Here is a 244-residue protein sequence, read N- to C-terminus: 5-oxoprolinase subunit A (244 aa).

The protein belongs to the LamB/PxpA family. As to quaternary structure, forms a complex composed of PxpA, PxpB and PxpC.

It carries out the reaction 5-oxo-L-proline + ATP + 2 H2O = L-glutamate + ADP + phosphate + H(+). Functionally, catalyzes the cleavage of 5-oxoproline to form L-glutamate coupled to the hydrolysis of ATP to ADP and inorganic phosphate. In Salmonella dublin (strain CT_02021853), this protein is 5-oxoprolinase subunit A.